We begin with the raw amino-acid sequence, 515 residues long: Cell division control protein 6 homolog (515 aa).

Positions 1–24 (MPTLRSATASASTAGTASPTAIAT) are enriched in low complexity. The tract at residues 1 to 70 (MPTLRSATAS…TPKLLSASPR (70 aa)) is disordered. Positions 43–52 (DASQFTSPHK) are enriched in polar residues.

Belongs to the CDC6/cdc18 family.

It is found in the nucleus. In terms of biological role, may be involved in the initiation of DNA replication. This is Cell division control protein 6 homolog from Oryza sativa subsp. japonica (Rice).